The following is a 1582-amino-acid chain: Sca1 complex scaffold protein scaA (1582 aa).

2 stretches are compositionally biased toward low complexity: residues 1-14 and 109-131; these read MSSLDPSLSTTPST and LSPSLSSSSSSSSSPSPPTTTST. Disordered stretches follow at residues 1-22 and 108-147; these read MSSLDPSLSTTPSTNRRGTFSK and GLSPSLSSSSSSSSSPSPPTTTSTTPPPPNNNNNSKQIKK. Residues 4 to 37 form a TPR 1 repeat; the sequence is LDPSLSTTPSTNRRGTFSKAKSFRRAALNLEPQG. Residues 166 to 199 form a TPR 2 repeat; the sequence is IYTSFPESMAFDDYMDYEESLVEWKRQVEQNLGI. A disordered region spans residues 246–349; that stretch reads IKETNSSVND…PSTGSLAGFV (104 aa). 3 stretches are compositionally biased toward polar residues: residues 249–267, 288–310, and 318–332; these read TNSSVNDDGESFSHSPTLR, NKDNASSQGTNHGVTLNHPNSGI, and SDTSTGSFEGTQLDG. Ser-359 is modified (phosphoserine; by PKB). A gefA and gefH binding region spans residues 400–600; it reads RSGSGFGMDH…QRQTSTWFRG (201 aa). 2 disordered regions span residues 468–493 and 686–734; these read PKNSELSTDDGSGGGSGGSGVDGVGG and SLSS…DKDK. Gly residues-rich tracts occupy residues 478–493 and 694–714; these read GSGGGSGGSGVDGVGG and QQQGGSGGGSGGSGSGSGSGS. A compositionally biased stretch (low complexity) spans 715-726; sequence GLNMSGTSGSSG. A TPR 3 repeat occupies 742–777; it reads MHSINNTTNVGTKEDRRQYTKILQTYEQRLQFSFRL. Over residues 864 to 875 the composition is skewed to gly residues; that stretch reads GGGSGGASGGGI. Residues 864–978 form a disordered region; the sequence is GGGSGGASGG…GSISTHPNTP (115 aa). Low complexity predominate over residues 903 to 928; sequence HIPSGSSLLSSPPNRQGSTGSFSFIG. The segment covering 940-953 has biased composition (polar residues); it reads NSSSLESPRTQSQL. The segment covering 960 to 972 has biased composition (low complexity); that stretch reads GSSPRSHSGGSIS. Residues 1000-1400 form a pppA and pho2B binding region; sequence FLDLTNEKLA…SIKKEGNLYN (401 aa). The TPR 4 repeat unit spans residues 1080–1113; it reads TQEVVRLVFVYYYLGIIQERLNFFSNNVGILGFV.

As to quaternary structure, component of the Sca1 complex composed of at least gefA, gefH, scaA, phr, and the protein phosphatase 2A subunits pppA and pho2B. In terms of processing, phosphorylated at Ser-359 by PKB and PKBR1 is induced by chemoattractant.

The protein localises to the cell membrane. In terms of biological role, component of the Sca1 complex, a regulator of cell motility, chemotaxis and signal relay. The Sca1 complex is recruited to the plasma membrane in a chemoattractant- and F-actin-dependent manner and is enriched at the leading edge of chemotaxing cells where it regulates F-actin dynamics and signal relay by controlling the activation of rasC and the downstream target of rapamycin complex 2 (TORC2)-Akt/protein kinase B (PKB) pathway. ScaA acts as a molecular scaffold, bringing together gefA, gefH and phr with PP2A. This Dictyostelium discoideum (Social amoeba) protein is Sca1 complex scaffold protein scaA.